The sequence spans 124 residues: Small ribosomal subunit protein uS12 (124 aa).

Aspartate 89 carries the post-translational modification 3-methylthioaspartic acid.

This sequence belongs to the universal ribosomal protein uS12 family. As to quaternary structure, part of the 30S ribosomal subunit. Contacts proteins S8 and S17. May interact with IF1 in the 30S initiation complex.

Its function is as follows. With S4 and S5 plays an important role in translational accuracy. Interacts with and stabilizes bases of the 16S rRNA that are involved in tRNA selection in the A site and with the mRNA backbone. Located at the interface of the 30S and 50S subunits, it traverses the body of the 30S subunit contacting proteins on the other side and probably holding the rRNA structure together. The combined cluster of proteins S8, S12 and S17 appears to hold together the shoulder and platform of the 30S subunit. This is Small ribosomal subunit protein uS12 from Buchnera aphidicola subsp. Schizaphis graminum (strain Sg).